Reading from the N-terminus, the 241-residue chain is uncharacterized protein (241 aa).

The GGDEF domain maps to 84–216; sequence TVVSLVVCDL…APGPVVAGRD (133 aa). The disordered stretch occupies residues 215-241; that stretch reads RDGEVVRLADSPPKSAHDRRRLRGNRP. Basic residues predominate over residues 231–241; sequence HDRRRLRGNRP.

This is an uncharacterized protein from Streptomyces griseus.